Consider the following 163-residue polypeptide: Lipoprotein signal peptidase (163 aa).

A run of 3 helical transmembrane segments spans residues Ile-3–Leu-23, Asn-70–Asn-90, and Ile-94–Phe-114. Residues Asp-125 and Asp-143 contribute to the active site. Residues Trp-134–Ile-154 traverse the membrane as a helical segment.

It belongs to the peptidase A8 family.

The protein resides in the cell membrane. The catalysed reaction is Release of signal peptides from bacterial membrane prolipoproteins. Hydrolyzes -Xaa-Yaa-Zaa-|-(S,diacylglyceryl)Cys-, in which Xaa is hydrophobic (preferably Leu), and Yaa (Ala or Ser) and Zaa (Gly or Ala) have small, neutral side chains.. It participates in protein modification; lipoprotein biosynthesis (signal peptide cleavage). Functionally, this protein specifically catalyzes the removal of signal peptides from prolipoproteins. The chain is Lipoprotein signal peptidase from Buchnera aphidicola subsp. Baizongia pistaciae (strain Bp).